The chain runs to 160 residues: Ribonuclease P protein component 2 (160 aa).

The protein belongs to the eukaryotic/archaeal RNase P protein component 2 family. In terms of assembly, consists of a catalytic RNA component and at least 4-5 protein subunits.

The protein resides in the cytoplasm. The enzyme catalyses Endonucleolytic cleavage of RNA, removing 5'-extranucleotides from tRNA precursor.. Part of ribonuclease P, a protein complex that generates mature tRNA molecules by cleaving their 5'-ends. The chain is Ribonuclease P protein component 2 from Methanoculleus marisnigri (strain ATCC 35101 / DSM 1498 / JR1).